The sequence spans 2261 residues: Phospholipid-transporting ATPase ABCA1 (2261 aa).

Residue Cys3 is the site of S-palmitoyl cysteine attachment. An N-linked (GlcNAc...) asparagine glycan is attached at Asn14. Residues 22–42 (TCQLLLEVAWPLFIFLILISV) form a helical membrane-spanning segment. The S-palmitoyl cysteine moiety is linked to residue Cys23. Topologically, residues 43–639 (RLSYPPYEQH…DIFLRVMSRS (597 aa)) are extracellular. The annulus domain 1 stretch occupies residues 69-80 (WVQGIICNANNP). Cys75 and Cys309 are oxidised to a cystine. Asn98, Asn151, Asn161, Asn196, Asn244, Asn292, Asn337, and Asn349 each carry an N-linked (GlcNAc...) asparagine glycan. Residues 368-379 (SRIIWKALKPLL) form an annulus domain 2 region. 4 N-linked (GlcNAc...) asparagine glycosylation sites follow: Asn400, Asn478, Asn489, and Asn521. Residues 564 to 594 (ERTNKIKDGYWDPGPRADPFEDMRYVWGGFA) are gateway domain. The next 5 helical transmembrane spans lie at 640-660 (MPLF…KSIV), 683-703 (FSWF…LVVI), 716-736 (SVVF…CFLI), 745-765 (LAAA…VLCV), and 777-797 (IFAS…FALF). N-linked (GlcNAc...) asparagine glycosylation is present at Asn820. The chain crosses the membrane as a helical span at residues 827–847 (MMLFDTFLYGVMTWYIEAVFP). The 233-residue stretch at 899–1131 (VSIQNLVKVY…LGTGYYLTLV (233 aa)) folds into the ABC transporter 1 domain. 933-940 (GHNGAGKT) serves as a coordination point for ATP. The chain crosses the membrane as a helical span at residues 941 to 961 (TTMSILTGLFPPTSGTAYILG). The residue at position 1042 (Ser1042) is a Phosphoserine; by PKA. 2 S-palmitoyl cysteine lipidation sites follow: Cys1110 and Cys1111. 2 N-linked (GlcNAc...) asparagine glycosylation sites follow: Asn1144 and Asn1294. The segment at 1285 to 1310 (FTEDDAVDPNDSDIDPESRETDLLSG) is disordered. Residues 1287-1299 (EDDAVDPNDSDID) are compositionally biased toward acidic residues. Ser1296 is subject to Phosphoserine. Residues 1351–1371 (IVLPAVFVCIALVFSLIVPPF) form a helical membrane-spanning segment. Topologically, residues 1372–1656 (GKYPSLELQP…ALMTTSVDVL (285 aa)) are extracellular. N-linked (GlcNAc...) asparagine glycosylation is present at Asn1453. Cys1463 and Cys1477 form a disulfide bridge. N-linked (GlcNAc...) asparagine glycans are attached at residues Asn1499, Asn1504, and Asn1637. Transmembrane regions (helical) follow at residues 1657–1677 (VSIC…VFLI), 1703–1723 (FVWD…IFIC), 1735–1755 (LPVL…LMYP), 1768–1788 (VVLT…TFVL), 1802–1822 (ILKS…LIDM), and 1852–1872 (NLFA…LIQY). An ABC transporter 2 domain is found at 1912–2144 (LEIKELTKIY…FGDGYTIVVR (233 aa)). Position 1946-1953 (1946-1953 (GVNGAGKS)) interacts with ATP. Asn2044 carries N-linked (GlcNAc...) asparagine glycosylation. Ser2054 is modified (phosphoserine; by PKA). Residue Asn2238 is glycosylated (N-linked (GlcNAc...) asparagine).

This sequence belongs to the ABC transporter superfamily. ABCA family. As to quaternary structure, interacts with MEGF10. May interact with APOE1; functionally associated with APOE1 in the biogenesis of HDLs. Interacts with ABCA8; this interaction potentiates cholesterol efflux. Interacts with ABCA12 and NR1H2; this interaction is required for ABCA1 localization to the cell surface and is necessary for its normal activity and stability. In terms of processing, phosphorylation on Ser-2054 regulates phospholipid efflux. Palmitoylated by ZDHHC8. Palmitoylation is essential for localization to the plasma membrane. Widely expressed in adult tissues. Highest levels are found in pregnant uterus and uterus.

The protein localises to the cell membrane. It localises to the endosome. It carries out the reaction ATP + H2O + phospholipidSide 1 = ADP + phosphate + phospholipidSide 2.. It catalyses the reaction a 1,2-diacyl-sn-glycero-3-phosphocholine(out) + ATP + H2O = a 1,2-diacyl-sn-glycero-3-phosphocholine(in) + ADP + phosphate + H(+). The enzyme catalyses a 1,2-diacyl-sn-glycero-3-phospho-L-serine(out) + ATP + H2O = a 1,2-diacyl-sn-glycero-3-phospho-L-serine(in) + ADP + phosphate + H(+). The catalysed reaction is a sphingomyelin(in) + ATP + H2O = a sphingomyelin(out) + ADP + phosphate + H(+). It carries out the reaction cholesterol(in) + ATP + H2O = cholesterol(out) + ADP + phosphate + H(+). ATPase activity is decreased by cholesterol and ceramide. ATPase activity is stimulated by phosphatidylcholine and to a lesser degree by phosphatidylserine and sphingomyelin. Phospholipid translocase activity is highly reduced by berylium fluoride and aluminum flouride and reduced by N-ethylmaleimide. Functionally, catalyzes the translocation of specific phospholipids from the cytoplasmic to the extracellular/lumenal leaflet of membrane coupled to the hydrolysis of ATP. Thereby, participates in phospholipid transfer to apolipoproteins to form nascent high density lipoproteins/HDLs. Transports preferentially phosphatidylcholine over phosphatidylserine. May play a similar role in the efflux of intracellular cholesterol to apolipoproteins and the formation of nascent high density lipoproteins/HDLs. Translocates phospholipids from the outer face of the plasma membrane and forces it through its gateway and annulus into an elongated hydrophobic tunnel in its extracellular domain. The polypeptide is Phospholipid-transporting ATPase ABCA1 (Mus musculus (Mouse)).